The primary structure comprises 255 residues: Ribosomal RNA small subunit methyltransferase A (255 aa).

S-adenosyl-L-methionine contacts are provided by Asn11, Leu13, Gly38, Glu59, Asp83, and Asn101.

Belongs to the class I-like SAM-binding methyltransferase superfamily. rRNA adenine N(6)-methyltransferase family. RsmA subfamily.

Its subcellular location is the cytoplasm. The enzyme catalyses adenosine(1518)/adenosine(1519) in 16S rRNA + 4 S-adenosyl-L-methionine = N(6)-dimethyladenosine(1518)/N(6)-dimethyladenosine(1519) in 16S rRNA + 4 S-adenosyl-L-homocysteine + 4 H(+). Specifically dimethylates two adjacent adenosines (A1518 and A1519) in the loop of a conserved hairpin near the 3'-end of 16S rRNA in the 30S particle. May play a critical role in biogenesis of 30S subunits. This chain is Ribosomal RNA small subunit methyltransferase A, found in Thiobacillus denitrificans (strain ATCC 25259 / T1).